Reading from the N-terminus, the 638-residue chain is NBPF family member NBPF4 (638 aa).

Coiled-coil stretches lie at residues 10–43 and 69–115; these read SERAEMNILEINQELRSQLAESNQQFRDLKEKFL and DSVL…KLRE. Positions 157-285 are disordered; sequence HLVHKLSPEN…VPPRHHDKSN (129 aa). The segment covering 165-179 has biased composition (acidic residues); sequence ENDEDEDEDEDDKDE. In terms of domain architecture, Olduvai 1 spans 174-261; it reads EDDKDEEVEK…EEEEALNIPP (88 aa). The span at 192–202 shows a compositional bias: basic and acidic residues; the sequence is EVQKTEEKEVP. Residues 214–226 show a composition bias toward low complexity; sequence SNSHNPSNSNQPH. Composition is skewed to basic and acidic residues over residues 232 to 251 and 264 to 273; these read TFKEHEVDSALVVESEHPHD and QNDHEEEEGK. Olduvai domains are found at residues 326-399 and 400-503; these read EKQS…ALVD and KIKK…SQAQ. The interval 562–584 is disordered; that stretch reads GMKNPPQLEDDALEGSASNTQGR.

It belongs to the NBPF family. As to expression, expressed in testis.

It is found in the cytoplasm. The sequence is that of NBPF family member NBPF4 from Homo sapiens (Human).